Reading from the N-terminus, the 924-residue chain is Autophagy-related protein 9B (924 aa).

Positions 1-144 are disordered; sequence MVSRMGWGGR…QDSPGLRVGP (144 aa). The Cytoplasmic segment spans residues 1 to 207; sequence MVSRMGWGGR…KIYSYHQRNG (207 aa). Low complexity predominate over residues 17–27; it reads WGDLGPGSVPL. Pro residues predominate over residues 28–40; the sequence is LPMPLPPPPPPSC. Polar residues predominate over residues 78–88; sequence LQGTGASQSCH. Low complexity predominate over residues 98 to 113; it reads PTQAQPAMTPASASPS. A Tyrosine-based sorting signal motif is present at residues 151 to 154; it reads YERL. A helical membrane pass occupies residues 208–228; sequence FACILLEDVFQLGQFIFIVTF. Residues 229–276 are Lumenal-facing; that stretch reads TTFLLRCVDYNVLFANQPSNHTRPGPFHSKVTLSDAILPSAQCAERIR. A helical transmembrane segment spans residues 277-297; the sequence is SSPLLVLLLVLAAGFWLVQLL. The Cytoplasmic portion of the chain corresponds to 298-438; the sequence is RSVCNLFSYW…GALAARWGRT (141 aa). An intramembrane segment occupies 439–459; it reads VLLLAALNLALSPLVLAWQVL. Residues 460–526 are Cytoplasmic-facing; sequence HVFYSHVELL…AAPPAPLRTL (67 aa). The helical transmembrane segment at 527–547 threads the bilayer; sequence LARQLVFFAGALFAALLVLTV. Residues 548–551 lie on the Lumenal side of the membrane; that stretch reads YDED. The helical transmembrane segment at 552-572 threads the bilayer; that stretch reads VLAVEHVLTAMTALGVTATVA. At 573–624 the chain is on the cytoplasmic side; it reads RSFIPEEQCQGRAPQLLLQTALAHMHYLPEEPGPGGRDRAYRQMAQLLQYRA. Residues 625–645 lie within the membrane without spanning it; sequence VSLLEELLSPLLTPLFLLFWF. At 646–924 the chain is on the cytoplasmic side; the sequence is RPRALEIIDF…KEPDRASCTD (279 aa). The interval 847 to 924 is disordered; the sequence is QQEPWGEAAA…KEPDRASCTD (78 aa). A compositionally biased stretch (low complexity) spans 878–890; that stretch reads SWSSDGSSPASSP. Residues 913–924 show a composition bias toward basic and acidic residues; it reads TQKEPDRASCTD.

It belongs to the ATG9 family. Homotrimer; forms a homotrimer with a central pore that forms a path between the two membrane leaflets. In terms of tissue distribution, highly expressed in placenta (trophoblast cells) and pituitary gland. Not expressed in vascular endothelial.

The protein resides in the preautophagosomal structure membrane. The enzyme catalyses a 1,2-diacyl-sn-glycero-3-phosphocholine(in) = a 1,2-diacyl-sn-glycero-3-phosphocholine(out). It carries out the reaction a 1,2-diacyl-sn-glycero-3-phospho-L-serine(in) = a 1,2-diacyl-sn-glycero-3-phospho-L-serine(out). It catalyses the reaction a 1,2-diacyl-sn-glycero-3-phosphoethanolamine(in) = a 1,2-diacyl-sn-glycero-3-phosphoethanolamine(out). Phospholipid scramblase involved in autophagy by mediating autophagosomal membrane expansion. Cycles between the preautophagosomal structure/phagophore assembly site (PAS) and the cytoplasmic vesicle pool and supplies membrane for the growing autophagosome. Lipid scramblase activity plays a key role in preautophagosomal structure/phagophore assembly by distributing the phospholipids that arrive through ATG2 (ATG2A or ATG2B) from the cytoplasmic to the luminal leaflet of the bilayer, thereby driving autophagosomal membrane expansion. In addition to autophagy, also plays a role in necrotic cell death. This is Autophagy-related protein 9B (ATG9B) from Homo sapiens (Human).